The sequence spans 387 residues: S-adenosylmethionine synthase (387 aa).

An ATP-binding site is contributed by His-19. Asp-21 is a binding site for Mg(2+). Glu-47 contributes to the K(+) binding site. Gln-103 contacts L-methionine. The tract at residues 103-113 (QSPDIAQGVEL) is flexible loop. ATP is bound by residues 167–169 (DMK), 233–234 (RF), Asp-242, 248–249 (RK), Ala-265, and Lys-269. Asp-242 lines the L-methionine pocket. Lys-273 contacts L-methionine.

Belongs to the AdoMet synthase family. Homotetramer; dimer of dimers. The cofactor is Mg(2+). K(+) serves as cofactor.

Its subcellular location is the cytoplasm. It catalyses the reaction L-methionine + ATP + H2O = S-adenosyl-L-methionine + phosphate + diphosphate. Its pathway is amino-acid biosynthesis; S-adenosyl-L-methionine biosynthesis; S-adenosyl-L-methionine from L-methionine: step 1/1. Functionally, catalyzes the formation of S-adenosylmethionine (AdoMet) from methionine and ATP. The overall synthetic reaction is composed of two sequential steps, AdoMet formation and the subsequent tripolyphosphate hydrolysis which occurs prior to release of AdoMet from the enzyme. The protein is S-adenosylmethionine synthase of Mycoplasma capricolum subsp. capricolum (strain California kid / ATCC 27343 / NCTC 10154).